Here is a 506-residue protein sequence, read N- to C-terminus: 2-isopropylmalate synthase (506 aa).

The Pyruvate carboxyltransferase domain maps to 4–266 (ILFMDTTLRD…EPSMTLKEIK (263 aa)). Mn(2+)-binding residues include Asp-13, His-201, His-203, and Asn-237. A regulatory domain region spans residues 390–506 (NITQLQVHFV…KLKSFIQLVK (117 aa)).

It belongs to the alpha-IPM synthase/homocitrate synthase family. LeuA type 1 subfamily. In terms of assembly, homodimer. The cofactor is Mn(2+).

The protein localises to the cytoplasm. The catalysed reaction is 3-methyl-2-oxobutanoate + acetyl-CoA + H2O = (2S)-2-isopropylmalate + CoA + H(+). It functions in the pathway amino-acid biosynthesis; L-leucine biosynthesis; L-leucine from 3-methyl-2-oxobutanoate: step 1/4. Its function is as follows. Catalyzes the condensation of the acetyl group of acetyl-CoA with 3-methyl-2-oxobutanoate (2-ketoisovalerate) to form 3-carboxy-3-hydroxy-4-methylpentanoate (2-isopropylmalate). The polypeptide is 2-isopropylmalate synthase (Bacillus cereus (strain ATCC 10987 / NRS 248)).